Reading from the N-terminus, the 360-residue chain is Photosystem II protein D1 (360 aa).

3 helical membrane passes run 29–46 (YIGW…TATT), 118–133 (HFLL…EWEL), and 142–156 (WIFV…AASA). Residue H118 participates in chlorophyll a binding. Y126 is a binding site for pheophytin a. [CaMn4O5] cluster contacts are provided by D170 and E189. The chain crosses the membrane as a helical span at residues 197-218 (FHMAGVAGVFGGSLFSAMHGSL). H198 contributes to the chlorophyll a binding site. A quinone-binding positions include H215 and 264 to 265 (SF). Residue H215 coordinates Fe cation. H272 lines the Fe cation pocket. Residues 274–288 (FLAAWPVVRIWLTAL) form a helical membrane-spanning segment. The [CaMn4O5] cluster site is built by H332, E333, D342, and A344. A propeptide spanning residues 345 to 360 (AGEVLPVAVSAPAVHA) is cleaved from the precursor.

This sequence belongs to the reaction center PufL/M/PsbA/D family. As to quaternary structure, PSII is composed of 1 copy each of membrane proteins PsbA, PsbB, PsbC, PsbD, PsbE, PsbF, PsbH, PsbI, PsbJ, PsbK, PsbL, PsbM, PsbT, PsbX, PsbY, PsbZ, Psb30/Ycf12, at least 3 peripheral proteins of the oxygen-evolving complex and a large number of cofactors. It forms dimeric complexes. Requires The D1/D2 heterodimer binds P680, chlorophylls that are the primary electron donor of PSII, and subsequent electron acceptors. It shares a non-heme iron and each subunit binds pheophytin, quinone, additional chlorophylls, carotenoids and lipids. D1 provides most of the ligands for the Mn4-Ca-O5 cluster of the oxygen-evolving complex (OEC). There is also a Cl(-1) ion associated with D1 and D2, which is required for oxygen evolution. The PSII complex binds additional chlorophylls, carotenoids and specific lipids. as cofactor. Tyr-161 forms a radical intermediate that is referred to as redox-active TyrZ, YZ or Y-Z. Post-translationally, C-terminally processed by CTPA; processing is essential to allow assembly of the oxygen-evolving complex and thus photosynthetic growth.

It localises to the plastid. Its subcellular location is the chloroplast thylakoid membrane. It catalyses the reaction 2 a plastoquinone + 4 hnu + 2 H2O = 2 a plastoquinol + O2. In terms of biological role, photosystem II (PSII) is a light-driven water:plastoquinone oxidoreductase that uses light energy to abstract electrons from H(2)O, generating O(2) and a proton gradient subsequently used for ATP formation. It consists of a core antenna complex that captures photons, and an electron transfer chain that converts photonic excitation into a charge separation. The D1/D2 (PsbA/PsbD) reaction center heterodimer binds P680, the primary electron donor of PSII as well as several subsequent electron acceptors. The sequence is that of Photosystem II protein D1 from Bumilleriopsis filiformis (Yellow-green alga).